The chain runs to 192 residues: Probable nicotinate-nucleotide adenylyltransferase (192 aa).

This sequence belongs to the NadD family.

It carries out the reaction nicotinate beta-D-ribonucleotide + ATP + H(+) = deamido-NAD(+) + diphosphate. It participates in cofactor biosynthesis; NAD(+) biosynthesis; deamido-NAD(+) from nicotinate D-ribonucleotide: step 1/1. Catalyzes the reversible adenylation of nicotinate mononucleotide (NaMN) to nicotinic acid adenine dinucleotide (NaAD). The chain is Probable nicotinate-nucleotide adenylyltransferase from Cereibacter sphaeroides (strain ATCC 17029 / ATH 2.4.9) (Rhodobacter sphaeroides).